Consider the following 696-residue polypeptide: D-(-)-3-hydroxybutyrate oligomer hydrolase (696 aa).

Positions 1-26 (MTKLGWGRRVVWGAALAAVAMLGACN) are cleaved as a signal peptide. Catalysis depends on Ser309, which acts as the Charge relay system.

The protein belongs to the D-(-)-3-hydroxybutyrate oligomer hydrolase family.

It localises to the secreted. The enzyme catalyses (3R)-hydroxybutanoate dimer + H2O = 2 (R)-3-hydroxybutanoate + H(+). Its pathway is lipid metabolism; butanoate metabolism. Its function is as follows. Participates in the degradation of poly-3-hydroxybutyrate (PHB). It works downstream of poly(3-hydroxybutyrate) depolymerase, hydrolyzing D(-)-3-hydroxybutyrate oligomers of various length (3HB-oligomers) into 3HB-monomers. The sequence is that of D-(-)-3-hydroxybutyrate oligomer hydrolase from Burkholderia cenocepacia (strain HI2424).